Reading from the N-terminus, the 76-residue chain is Large ribosomal subunit protein eL20 (76 aa).

This sequence belongs to the eukaryotic ribosomal protein eL20 family. As to quaternary structure, part of the 50S ribosomal subunit. Binds 23S rRNA.

In Methanococcus maripaludis (strain DSM 14266 / JCM 13030 / NBRC 101832 / S2 / LL), this protein is Large ribosomal subunit protein eL20.